A 67-amino-acid chain; its full sequence is Small ribosomal subunit protein eS17 (67 aa).

It belongs to the eukaryotic ribosomal protein eS17 family.

In Thermococcus onnurineus (strain NA1), this protein is Small ribosomal subunit protein eS17.